Here is a 138-residue protein sequence, read N- to C-terminus: Small ribosomal subunit protein uS11 (138 aa).

A compositionally biased stretch (polar residues) spans 1–12 (MAKQSAKGSTTT). The segment at 1 to 37 (MAKQSAKGSTTTKRQRGKRREKKNVPRGQAHIQSTFN) is disordered. Over residues 13–22 (KRQRGKRREK) the composition is skewed to basic residues.

This sequence belongs to the universal ribosomal protein uS11 family. As to quaternary structure, part of the 30S ribosomal subunit. Interacts with proteins S7 and S18. Binds to IF-3.

Its function is as follows. Located on the platform of the 30S subunit, it bridges several disparate RNA helices of the 16S rRNA. Forms part of the Shine-Dalgarno cleft in the 70S ribosome. This Roseiflexus castenholzii (strain DSM 13941 / HLO8) protein is Small ribosomal subunit protein uS11.